The chain runs to 1521 residues: Suppressor of Ty 6 homolog (1521 aa).

The interval 1-238 (MDFIDNQAEE…EEIIEDDGEG (238 aa)) is disordered. Basic residues predominate over residues 26 to 41 (KKMKMAKEKSKRKKKM). The Nuclear localization signal motif lies at 26 to 42 (KKMKMAKEKSKRKKKMV). Composition is skewed to acidic residues over residues 45–56 (SDEDEDDDDDEE) and 67–76 (ADDDDEEEDA). Over residues 77–89 (KSEKSEKSRHSGE) the composition is skewed to basic and acidic residues. Acidic residues predominate over residues 90–99 (DELDDEDLDL). A compositionally biased stretch (basic and acidic residues) spans 126–157 (PIRRPNHEDDDLLSERGSDDGDRRKDRGRGDR). Acidic residues-rich tracts occupy residues 166 to 176 (RSEDDFIEDDG), 191 to 200 (NLPEGAEDDA), and 209 to 238 (FNLD…DGEG). The S1 motif domain maps to 1183 to 1252 (LGDSRQGGCP…ERFSLFLSCK (70 aa)). The 90-residue stretch at 1300–1389 (HPNFHNVSYE…IARFVQPMIQ (90 aa)) folds into the SH2 domain.

Belongs to the SPT6 family. In terms of assembly, interacts with glp-1 and lin-12. In terms of tissue distribution, abundant in embryos, and less abundant in larvae.

It localises to the nucleus. Its function is as follows. Histone H3-H4 chaperone that plays a role in maintenance of chromatin structure during RNA polymerase II transcription elongation. Required for several aspects of morphogenesis of C.elegans, including regulation of division in the germline and gut and specification of ventral-uterine precursor cell fate. The protein is Suppressor of Ty 6 homolog (emb-5) of Caenorhabditis elegans.